A 97-amino-acid chain; its full sequence is Co-chaperonin GroES (97 aa).

It belongs to the GroES chaperonin family. Heptamer of 7 subunits arranged in a ring. Interacts with the chaperonin GroEL.

It is found in the cytoplasm. Its function is as follows. Together with the chaperonin GroEL, plays an essential role in assisting protein folding. The GroEL-GroES system forms a nano-cage that allows encapsulation of the non-native substrate proteins and provides a physical environment optimized to promote and accelerate protein folding. GroES binds to the apical surface of the GroEL ring, thereby capping the opening of the GroEL channel. The protein is Co-chaperonin GroES of Pectobacterium carotovorum subsp. carotovorum (strain PC1).